We begin with the raw amino-acid sequence, 207 residues long: MPLPDFRLIRLLPLAALVLTACSVTTPKGPGKSPDSPQWRQHQQDVRNLNQYQTHGAFAYISDQQKVYARFFWQQTGQDRYRLLLTNPLGSTELELNAQPGNVQLVDNKGQRYTADDAEEMIGKLTGMPIPLNSLRQWILGLPGDATDYKLDDQYRLSEITYSQNGKNWKVVYGGYDTKTHPAMPANMELTDGGQRIKLKMDNWIVK.

A signal peptide spans 1–21; the sequence is MPLPDFRLIRLLPLAALVLTA. A lipid anchor (N-palmitoyl cysteine) is attached at cysteine 22. Residue cysteine 22 is the site of S-diacylglycerol cysteine attachment.

Belongs to the LolB family. In terms of assembly, monomer.

Its subcellular location is the cell outer membrane. In terms of biological role, plays a critical role in the incorporation of lipoproteins in the outer membrane after they are released by the LolA protein. This Shigella boydii serotype 18 (strain CDC 3083-94 / BS512) protein is Outer-membrane lipoprotein LolB.